The sequence spans 414 residues: Glucose-1-phosphate adenylyltransferase (414 aa).

Alpha-D-glucose 1-phosphate is bound by residues Gly164, Glu184–Lys185, and Ser204.

Belongs to the bacterial/plant glucose-1-phosphate adenylyltransferase family. As to quaternary structure, homotetramer.

It catalyses the reaction alpha-D-glucose 1-phosphate + ATP + H(+) = ADP-alpha-D-glucose + diphosphate. It functions in the pathway glycan biosynthesis; glycogen biosynthesis. Functionally, involved in the biosynthesis of ADP-glucose, a building block required for the elongation reactions to produce glycogen. Catalyzes the reaction between ATP and alpha-D-glucose 1-phosphate (G1P) to produce pyrophosphate and ADP-Glc. This is Glucose-1-phosphate adenylyltransferase from Acidothermus cellulolyticus (strain ATCC 43068 / DSM 8971 / 11B).